Here is a 423-residue protein sequence, read N- to C-terminus: MEGLSPRQGNNTTSSEGPFGTLGNATGISDVTFSYQVITSLLLGTLIFCAVLGNACVVAAIALERSLQNVANYLIGSLAVTDLMVSVLVLPMAALYQVLNKWTLGQVTCDLFIALDVLCCTSSILHLCAIALDRYWAITDPIDYVNKRTPRRAAALISLTWLIGFLISIPPMLGWRTPEDRSDPDACTISKDHGYTIYSTFGAFYIPLLLMLVLYGRIFRAARFRIRKTVKKAERKGADARSGVSPAPQPRKSVNGEPGGREWRQGPGSQAGGPLCTNGAVRRGDDGAALEVIEVHRVGSSKEHLPLPCEAGAIPCAPASFEKKNERNAEAKRKMALARERKTVKTLGIIMGTFILCWLPFFIVALVLPFCESSCHMPTLLGAIINWLGYSNSLLNPVIYAYFNKDFQNAFKKIVRCKFCRRR.

Topologically, residues 1 to 38 (MEGLSPRQGNNTTSSEGPFGTLGNATGISDVTFSYQVI) are extracellular. Residues Asn-10, Asn-11, and Asn-24 are each glycosylated (N-linked (GlcNAc...) asparagine). Residues 39 to 59 (TSLLLGTLIFCAVLGNACVVA) form a helical membrane-spanning segment. The Cytoplasmic portion of the chain corresponds to 60–73 (AIALERSLQNVANY). A helical membrane pass occupies residues 74 to 98 (LIGSLAVTDLMVSVLVLPMAALYQV). The Extracellular segment spans residues 99–107 (LNKWTLGQV). The chain crosses the membrane as a helical span at residues 108-132 (TCDLFIALDVLCCTSSILHLCAIAL). Cys-109 and Cys-187 are oxidised to a cystine. Residues Asp-116 and Cys-120 each coordinate serotonin. The DRY motif; important for ligand-induced conformation changes motif lies at 133–135 (DRY). Topologically, residues 133-152 (DRYWAITDPIDYVNKRTPRR) are cytoplasmic. A helical transmembrane segment spans residues 153 to 174 (AAALISLTWLIGFLISIPPMLG). Residues 175–193 (WRTPEDRSDPDACTISKDH) are Extracellular-facing. Residues 194–216 (GYTIYSTFGAFYIPLLLMLVLYG) traverse the membrane as a helical segment. The Cytoplasmic portion of the chain corresponds to 217–346 (RIFRAARFRI…LARERKTVKT (130 aa)). Positions 235 to 277 (RKGADARSGVSPAPQPRKSVNGEPGGREWRQGPGSQAGGPLCT) are disordered. Residues Lys-345, Thr-346, and Gly-352 each coordinate 1D-myo-inositol 4-phosphate. A helical transmembrane segment spans residues 347 to 370 (LGIIMGTFILCWLPFFIVALVLPF). Residues 371 to 378 (CESSCHMP) are Extracellular-facing. A helical transmembrane segment spans residues 379–403 (TLLGAIINWLGYSNSLLNPVIYAYF). An NPxxY motif; important for ligand-induced conformation changes and signaling motif is present at residues 396–400 (NPVIY). 1D-myo-inositol 4-phosphate is bound by residues Phe-403, Asn-404, and Lys-405. The Cytoplasmic segment spans residues 404–423 (NKDFQNAFKKIVRCKFCRRR).

Belongs to the G-protein coupled receptor 1 family. 5-hydroxytryptamine receptor subfamily. HTR1A sub-subfamily. As to quaternary structure, heterodimer; heterodimerizes with GPER1. Interacts with YIF1B. Interacts with GPR39 and GALR1.

It localises to the cell membrane. The protein localises to the cell projection. The protein resides in the dendrite. Its activity is regulated as follows. G-protein coupled receptor activity is regulated by lipids: phosphatidylinositol 4-phosphate increases HTR1A-mediated activity. Its function is as follows. G-protein coupled receptor for 5-hydroxytryptamine (serotonin). Also functions as a receptor for various drugs and psychoactive substances. Ligand binding causes a conformation change that triggers signaling via guanine nucleotide-binding proteins (G proteins) and modulates the activity of downstream effectors, such as adenylate cyclase. HTR1A is coupled to G(i)/G(o) G alpha proteins and mediates inhibitory neurotransmission: signaling inhibits adenylate cyclase activity and activates a phosphatidylinositol-calcium second messenger system that regulates the release of Ca(2+) ions from intracellular stores. Beta-arrestin family members regulate signaling by mediating both receptor desensitization and resensitization processes. The sequence is that of 5-hydroxytryptamine receptor 1A (HTR1A) from Canis lupus familiaris (Dog).